The following is a 36-amino-acid chain: Photosystem I reaction center subunit VIII (36 aa).

Residues leucine 6–leucine 28 traverse the membrane as a helical segment.

Belongs to the PsaI family.

It is found in the plastid. The protein localises to the chloroplast thylakoid membrane. May help in the organization of the PsaL subunit. The polypeptide is Photosystem I reaction center subunit VIII (Amborella trichopoda).